The chain runs to 552 residues: Serine protease 53 (552 aa).

The N-terminal stretch at 1 to 23 (MRQSWRPELLIVGAVVVIEGLQA) is a signal peptide. 2 consecutive Peptidase S1 domains span residues 24–273 (AQRA…AHVH) and 294–525 (VACG…NLDW). Positions 27-46 (ACGQRGPGPPEPQEGNTLPG) are disordered. Cysteines 62 and 78 form a disulfide. Residues His-77 and Asp-128 each act as charge relay system in the active site. 4 disulfide bridges follow: Cys-158/Cys-230, Cys-187/Cys-209, Cys-220/Cys-249, and Cys-326/Cys-342. Active-site charge relay system residues include Ser-224, His-341, and Asp-382. Disulfide bonds link Cys-443–Cys-463 and Cys-473–Cys-501. Ser-477 functions as the Charge relay system in the catalytic mechanism.

This sequence belongs to the peptidase S1 family.

It localises to the secreted. Its function is as follows. In vitro can degrade the fibrinogen alpha chain of as well as pro-urokinase-type plasminogen activator. This is Serine protease 53 (Prss53) from Mus musculus (Mouse).